We begin with the raw amino-acid sequence, 593 residues long: Aspartate--tRNA ligase (593 aa).

Glu173 serves as a coordination point for L-aspartate. The tract at residues Gln197 to Lys200 is aspartate. Arg219 lines the L-aspartate pocket. ATP is bound by residues Arg219–Glu221 and Gln228. Residue His448 participates in L-aspartate binding. Glu482 contacts ATP. Arg489 contacts L-aspartate. Position 534–537 (Gly534–Arg537) interacts with ATP.

It belongs to the class-II aminoacyl-tRNA synthetase family. Type 1 subfamily. As to quaternary structure, homodimer.

Its subcellular location is the cytoplasm. The enzyme catalyses tRNA(Asp) + L-aspartate + ATP = L-aspartyl-tRNA(Asp) + AMP + diphosphate. Functionally, catalyzes the attachment of L-aspartate to tRNA(Asp) in a two-step reaction: L-aspartate is first activated by ATP to form Asp-AMP and then transferred to the acceptor end of tRNA(Asp). The polypeptide is Aspartate--tRNA ligase (Shewanella denitrificans (strain OS217 / ATCC BAA-1090 / DSM 15013)).